A 477-amino-acid polypeptide reads, in one-letter code: Penton protein (477 aa).

The protein belongs to the adenoviridae penton family. Interacts with the fiber protein (via N-terminal tail region). Interacts with the capsid vertex protein; this interaction binds the penton base to neighboring peripentonal hexons.

The protein localises to the virion. The protein resides in the host nucleus. Its function is as follows. Major capsid protein that self-associates to form penton base pentamers, each in the shape of a pentagon, situated at the 12 vertices of the pseudo T=25 capsid. Involved in virus secondary attachment to host cell after initial attachment by the fiber protein, and in endocytosis of virions. As the virus enters the host cell, penton proteins are shed concomitant with virion acidification in the endosome. In Canis lupus familiaris (Dog), this protein is Penton protein.